The primary structure comprises 477 residues: Alkaline phosphatase (477 aa).

Position 44 (D44) interacts with Mg(2+). D44 provides a ligand contact to Zn(2+). The active-site Phosphoserine intermediate is S94. N124 carries N-linked (GlcNAc...) asparagine glycosylation. Residues H155 and T157 each coordinate Mg(2+). A disulfide bridge links C165 with C185. N-linked (GlcNAc...) asparagine glycosylation occurs at N214. E315 contributes to the Mg(2+) binding site. Residues D320, H324, D361, and H362 each contribute to the Zn(2+) site. Residue N413 is glycosylated (N-linked (GlcNAc...) asparagine). A Zn(2+)-binding site is contributed by H437.

As to quaternary structure, homodimer. Requires Mg(2+) as cofactor. Zn(2+) serves as cofactor.

Its subcellular location is the cell membrane. The enzyme catalyses a phosphate monoester + H2O = an alcohol + phosphate. The protein is Alkaline phosphatase of Gadus morhua (Atlantic cod).